The sequence spans 404 residues: Cysteine desulfurase IscS (404 aa).

Residues Ala-75 to Thr-76, Asn-155, Gln-183, and Ser-203 to His-205 each bind pyridoxal 5'-phosphate. An N6-(pyridoxal phosphate)lysine modification is found at Lys-206. Thr-243 contacts pyridoxal 5'-phosphate. The Cysteine persulfide intermediate role is filled by Cys-328. Residue Cys-328 coordinates [2Fe-2S] cluster.

The protein belongs to the class-V pyridoxal-phosphate-dependent aminotransferase family. NifS/IscS subfamily. Homodimer. Forms a heterotetramer with IscU, interacts with other sulfur acceptors. The cofactor is pyridoxal 5'-phosphate.

The protein resides in the cytoplasm. The enzyme catalyses (sulfur carrier)-H + L-cysteine = (sulfur carrier)-SH + L-alanine. It functions in the pathway cofactor biosynthesis; iron-sulfur cluster biosynthesis. Its function is as follows. Master enzyme that delivers sulfur to a number of partners involved in Fe-S cluster assembly, tRNA modification or cofactor biosynthesis. Catalyzes the removal of elemental sulfur atoms from cysteine to produce alanine. Functions as a sulfur delivery protein for Fe-S cluster synthesis onto IscU, an Fe-S scaffold assembly protein, as well as other S acceptor proteins. The protein is Cysteine desulfurase IscS of Pseudomonas fluorescens (strain SBW25).